We begin with the raw amino-acid sequence, 103 residues long: Large ribosomal subunit protein eL14 (103 aa).

It belongs to the eukaryotic ribosomal protein eL14 family.

The sequence is that of Large ribosomal subunit protein eL14 from Ignicoccus hospitalis (strain KIN4/I / DSM 18386 / JCM 14125).